Consider the following 302-residue polypeptide: Glutaminase (302 aa).

Substrate is bound by residues S61, N111, E155, N162, Y186, Y238, and V256.

It belongs to the glutaminase family. Homotetramer.

The catalysed reaction is L-glutamine + H2O = L-glutamate + NH4(+). The polypeptide is Glutaminase (Pseudomonas fluorescens (strain SBW25)).